The chain runs to 607 residues: Threonine--tRNA ligase (607 aa).

Positions 1–143 (MRVLYIHAER…SFKPEEARVA (143 aa)) are editing domain. 2 catalytic regions span residues 193-489 (PRYL…PRLP) and 194-489 (RYLD…PRLP). Zn(2+)-binding residues include Cys-286, His-337, and His-458.

It belongs to the class-II aminoacyl-tRNA synthetase family. In terms of assembly, homodimer. Zn(2+) serves as cofactor.

It is found in the cytoplasm. It catalyses the reaction tRNA(Thr) + L-threonine + ATP = L-threonyl-tRNA(Thr) + AMP + diphosphate + H(+). Catalyzes the attachment of threonine to tRNA(Thr) in a two-step reaction: L-threonine is first activated by ATP to form Thr-AMP and then transferred to the acceptor end of tRNA(Thr). Also edits incorrectly charged L-seryl-tRNA(Thr). The chain is Threonine--tRNA ligase from Pyrobaculum calidifontis (strain DSM 21063 / JCM 11548 / VA1).